A 952-amino-acid polypeptide reads, in one-letter code: Glutamate receptor 2.7 (952 aa).

Residues 1 to 32 (MKVMNPRKTNNTFMYYFVLFVCGFVLMEGCLG) form the signal peptide. Topologically, residues 33-582 (QNQTTEIKVG…NTWVFLRPWS (550 aa)) are extracellular. N-linked (GlcNAc...) asparagine glycosylation is found at asparagine 34, asparagine 60, asparagine 355, asparagine 428, and asparagine 546. Residues 583–603 (LDLWVTTACFFVFIGFIVWIL) form a helical membrane-spanning segment. The Cytoplasmic segment spans residues 604-612 (EHRVNTDFR). Residues 613–633 (GPPHHQIGTSFWFAFSTMNFA) form a helical membrane-spanning segment. Topologically, residues 634–637 (HREK) are cytoplasmic. The helical transmembrane segment at 638–658 (VVSNLARFVVLVWCFVVLVLI) threads the bilayer. The Extracellular portion of the chain corresponds to 659–821 (QSYTANLTSF…LSSNHLSLSS (163 aa)). Residues asparagine 664, asparagine 728, asparagine 748, asparagine 784, and asparagine 809 are each glycosylated (N-linked (GlcNAc...) asparagine). A helical transmembrane segment spans residues 822–842 (FWGLFLIAGIASFLALLIFVA). The Cytoplasmic segment spans residues 843–952 (NFLYEHKHTL…ESAIIQCEGE (110 aa)). Residues 889–908 (VSSPITQGSSSPLTDQSTPL) are compositionally biased toward polar residues. Disordered regions lie at residues 889 to 914 (VSSP…SPEQ) and 932 to 952 (FTTQ…CEGE).

This sequence belongs to the glutamate-gated ion channel (TC 1.A.10.1) family. In terms of assembly, may form heteromers. In terms of tissue distribution, expressed predominantly in leaves.

Its subcellular location is the membrane. Glutamate-gated receptor that probably acts as a non-selective cation channel. May be involved in light-signal transduction and calcium homeostasis via the regulation of calcium influx into cells. The polypeptide is Glutamate receptor 2.7 (GLR2.7) (Arabidopsis thaliana (Mouse-ear cress)).